The following is a 369-amino-acid chain: Ubiquitin carboxyl-terminal hydrolase 12 (369 aa).

A Required for plasma membrane localization of USP12/WDR20 motif is present at residues M1–L4. Positions F39–R368 constitute a USP domain. C48 (nucleophile) is an active-site residue. The segment at K145–T165 is disordered. 4 residues coordinate Zn(2+): C185, C188, C232, and C235. The active-site Proton acceptor is H316.

The protein belongs to the peptidase C19 family. USP12/USP46 subfamily. Interacts with WDR48. Interacts with WDR20; this interaction promotes translocation of the USP12 complex to the plasma membrane. Component of the USP12/WDR20/WDR48 deubiquitinating complex. Component of the USP12/WDR20/WDR48 deubiquitinating complex. Interacts with PHLPP1. Interacts with RBPJ. Interacts with CBP; this interaction blocks the acetyltransferase activity of CREBBP.

The protein resides in the nucleus. The protein localises to the cytoplasm. It is found in the cell membrane. It carries out the reaction Thiol-dependent hydrolysis of ester, thioester, amide, peptide and isopeptide bonds formed by the C-terminal Gly of ubiquitin (a 76-residue protein attached to proteins as an intracellular targeting signal).. With respect to regulation, activated by interaction with WDR20, WDR48 and DMWD through different allosteric mechanisms. Functionally, deubiquitinating enzyme that plays various roles in the regulation of the immune response and inflammation. During TCR engagement and activation, translocates into the cytoplasm and deubiquitinates its substrates LAT and TRAT1 and prevents their lysosome-dependent degradation to stabilize the TCR signaling complex at the plasma membrane. Plays an essential role in the selective LPS-induced macrophage response through the activation of NF-kappa-B pathway. In addition, promotes that antiviral immune response through targeting DNA sensor IFI16 to inhibit its proteasome-dependent degradation. Participates in the interferon signaling pathway and antiviral response independently of its deubiquitinase activity by maintaining nuclear phosphorylated STAT1 levels via inhibition of its CREBBP-mediated acetylation and subsequent dephosphorylation. Plays an intrinsic role in promoting the differentiation, activation and proliferation of CD4(+) T-cell by activating the NF-kappa-B signaling pathway through deubiquitinating and stabilizing B-cell lymphoma/leukemia 10/BCL10. In myeloid-derived suppressor cells promotes the activation of the NF-kappa-B via deubiquitination and stabilization of RELA. Regulates the 'Lys-63'-linked polyubiquitin chains of BAX and thereby modulates the mitochondrial apoptotic process. Negative regulator of NOTCH signaling that specifically deubiquitinates non-activated NOTCH receptors to target them for lysosomal degradation; deubiquitination of NOTCH stimulates its transport form late endosomes to lysosomes. Protects neurons against HTT/huntingtin-induced polyglutamine expansion-dependent neurodegeneration through regulation of autophagic flux. This function is independent of deubiquitinase activity or of other components of the USP12-WDR20-WDR48 deubiquitinating complex. In complex with WDR48, acts as a potential tumor suppressor by positively regulating PHLPP1 stability. This chain is Ubiquitin carboxyl-terminal hydrolase 12 (USP12), found in Bos taurus (Bovine).